Consider the following 140-residue polypeptide: uncharacterized protein (140 aa).

The segment at 21–42 (CPYCNYTNADVKAIKKHIKSKH) adopts a C2H2-type zinc-finger fold.

To M.jannaschii MJECL27.

This is an uncharacterized protein from Methanocaldococcus jannaschii (strain ATCC 43067 / DSM 2661 / JAL-1 / JCM 10045 / NBRC 100440) (Methanococcus jannaschii).